A 132-amino-acid chain; its full sequence is Photosystem II extrinsic protein U (132 aa).

An N-terminal signal peptide occupies residues 1-29 (MKRLLSWLTGALVMAGLLSSLVLPSAVYA).

Belongs to the PsbU family. PSII is composed of 1 copy each of membrane proteins PsbA, PsbB, PsbC, PsbD, PsbE, PsbF, PsbH, PsbI, PsbJ, PsbK, PsbL, PsbM, PsbT, PsbX, PsbY, PsbZ, Psb30/Ycf12, peripheral proteins PsbO, CyanoQ (PsbQ), PsbU, PsbV and a large number of cofactors. It forms dimeric complexes.

It localises to the cellular thylakoid membrane. In terms of biological role, one of the extrinsic, lumenal subunits of photosystem II (PSII). PSII is a light-driven water plastoquinone oxidoreductase, using light energy to abstract electrons from H(2)O, generating a proton gradient subsequently used for ATP formation. The extrinsic proteins stabilize the structure of photosystem II oxygen-evolving complex (OEC), the ion environment of oxygen evolution and protect the OEC against heat-induced inactivation. This is Photosystem II extrinsic protein U from Synechococcus sp. (strain CC9902).